The following is a 192-amino-acid chain: PTS-dependent dihydroxyacetone kinase, ADP-binding subunit DhaL (192 aa).

Residues 5 to 189 form the DhaL domain; the sequence is DTTIEWLGKF…SAYLFETLLE (185 aa). Residues aspartate 29, aspartate 34, and aspartate 36 each contribute to the Mg(2+) site. Residues 37 to 40, 78 to 79, glycine 115, methionine 124, arginine 161, and 174 to 176 contribute to the ADP site; these read HGAN, AS, and DPG.

Homodimer. The dihydroxyacetone kinase complex is composed of a homodimer of DhaM, a homodimer of DhaK and the subunit DhaL. Mg(2+) serves as cofactor.

It is found in the cytoplasm. The catalysed reaction is dihydroxyacetone + phosphoenolpyruvate = dihydroxyacetone phosphate + pyruvate. It participates in polyol metabolism; glycerol degradation. ADP-binding subunit of the dihydroxyacetone kinase, which is responsible for the phosphoenolpyruvate (PEP)-dependent phosphorylation of dihydroxyacetone. DhaL-ADP is converted to DhaL-ATP via a phosphoryl group transfer from DhaM and transmits it to dihydroxyacetone binds to DhaK. This is PTS-dependent dihydroxyacetone kinase, ADP-binding subunit DhaL from Lactococcus lactis subsp. lactis (strain IL1403) (Streptococcus lactis).